A 142-amino-acid polypeptide reads, in one-letter code: Small ribosomal subunit protein uS12y (142 aa).

Pro61 bears the Hydroxyproline mark.

It belongs to the universal ribosomal protein uS12 family.

This chain is Small ribosomal subunit protein uS12y (RPS23B), found in Arabidopsis thaliana (Mouse-ear cress).